We begin with the raw amino-acid sequence, 194 residues long: NADH-quinone oxidoreductase subunit B (194 aa).

4 residues coordinate [4Fe-4S] cluster: cysteine 72, cysteine 73, cysteine 137, and cysteine 167.

This sequence belongs to the complex I 20 kDa subunit family. In terms of assembly, NDH-1 is composed of 14 different subunits. Subunits NuoB, C, D, E, F, and G constitute the peripheral sector of the complex. [4Fe-4S] cluster is required as a cofactor.

The protein localises to the cell inner membrane. It carries out the reaction a quinone + NADH + 5 H(+)(in) = a quinol + NAD(+) + 4 H(+)(out). NDH-1 shuttles electrons from NADH, via FMN and iron-sulfur (Fe-S) centers, to quinones in the respiratory chain. Couples the redox reaction to proton translocation (for every two electrons transferred, four hydrogen ions are translocated across the cytoplasmic membrane), and thus conserves the redox energy in a proton gradient. In Granulibacter bethesdensis (strain ATCC BAA-1260 / CGDNIH1), this protein is NADH-quinone oxidoreductase subunit B.